Reading from the N-terminus, the 254-residue chain is Ubiquinone/menaquinone biosynthesis C-methyltransferase UbiE (254 aa).

Residues Thr-77, Asp-98, 126–127 (NA), and Ser-143 contribute to the S-adenosyl-L-methionine site.

The protein belongs to the class I-like SAM-binding methyltransferase superfamily. MenG/UbiE family.

The enzyme catalyses a 2-demethylmenaquinol + S-adenosyl-L-methionine = a menaquinol + S-adenosyl-L-homocysteine + H(+). The catalysed reaction is a 2-methoxy-6-(all-trans-polyprenyl)benzene-1,4-diol + S-adenosyl-L-methionine = a 5-methoxy-2-methyl-3-(all-trans-polyprenyl)benzene-1,4-diol + S-adenosyl-L-homocysteine + H(+). Its pathway is quinol/quinone metabolism; menaquinone biosynthesis; menaquinol from 1,4-dihydroxy-2-naphthoate: step 2/2. It participates in cofactor biosynthesis; ubiquinone biosynthesis. In terms of biological role, methyltransferase required for the conversion of demethylmenaquinol (DMKH2) to menaquinol (MKH2) and the conversion of 2-polyprenyl-6-methoxy-1,4-benzoquinol (DDMQH2) to 2-polyprenyl-3-methyl-6-methoxy-1,4-benzoquinol (DMQH2). This chain is Ubiquinone/menaquinone biosynthesis C-methyltransferase UbiE, found in Blochmanniella floridana.